We begin with the raw amino-acid sequence, 317 residues long: Carbonic anhydrase 5B, mitochondrial (317 aa).

A mitochondrion-targeting transit peptide spans 1-33 (MVVMNSLRVILQASPGKLLWRKFQIPRFMPARP). The region spanning 37–296 (YTCTYKTRNR…LMNRTVRSSF (260 aa)) is the Alpha-carbonic anhydrase domain. Residues histidine 130, histidine 132, and histidine 155 each coordinate Zn(2+). 235-236 (TT) is a substrate binding site.

Belongs to the alpha-carbonic anhydrase family. The cofactor is Zn(2+). In terms of tissue distribution, strongest expression in heart, pancreas, kidney, placenta, lung, and skeletal muscle. Not expressed in liver.

Its subcellular location is the mitochondrion. The enzyme catalyses hydrogencarbonate + H(+) = CO2 + H2O. Inhibited by coumarins, sulfonamide derivatives such as acetazolamide (AZA), saccharin and Foscarnet (phosphonoformate trisodium salt). Its function is as follows. Mitochondrial carbonic anhydrase that catalyzes the reversible conversion of carbon dioxide to bicarbonate/HCO3. The protein is Carbonic anhydrase 5B, mitochondrial (CA5B) of Homo sapiens (Human).